Consider the following 258-residue polypeptide: Cytochrome b-c1 complex subunit Rieske-1, mitochondrial (258 aa).

The N-terminal 46 residues, 1–46 (WPVRSAAPSSSAFISANHFSSDDDSSSPRSISPSLASVFLHHTRGF), are a transit peptide targeting the mitochondrion. At 47 to 95 (SSNSVSPAHDMGLVPDLPPTVAAIKNPTSKIVYDEHNHERYPPGDPSKR) the chain is on the mitochondrial matrix side. A helical transmembrane segment spans residues 96 to 118 (AFAYFVLTGGRFVYASLMRLLIL). Topologically, residues 119-258 (KFVLSMSASK…FLEENKLLIG (140 aa)) are mitochondrial intermembrane. Positions 161 to 256 (RRRTEDDISL…YSFLEENKLL (96 aa)) constitute a Rieske domain. [2Fe-2S] cluster-binding residues include C201, H203, C220, and H223. A disulfide bond links C206 and C222.

This sequence belongs to the Rieske iron-sulfur protein family. As to quaternary structure, component of the ubiquinol-cytochrome c oxidoreductase (cytochrome b-c1 complex, complex III, CIII), a multisubunit enzyme composed of 3 respiratory subunits cytochrome b, cytochrome c1 and Rieske protein, 2 core protein subunits, and several low-molecular weight protein subunits. The complex exists as an obligatory dimer and forms supercomplexes (SCs) in the inner mitochondrial membrane with cytochrome c oxidase (complex IV, CIV). The cofactor is [2Fe-2S] cluster.

Its subcellular location is the mitochondrion inner membrane. The catalysed reaction is a quinol + 2 Fe(III)-[cytochrome c](out) = a quinone + 2 Fe(II)-[cytochrome c](out) + 2 H(+)(out). Component of the ubiquinol-cytochrome c oxidoreductase, a multisubunit transmembrane complex that is part of the mitochondrial electron transport chain which drives oxidative phosphorylation. The respiratory chain contains 3 multisubunit complexes succinate dehydrogenase (complex II, CII), ubiquinol-cytochrome c oxidoreductase (cytochrome b-c1 complex, complex III, CIII) and cytochrome c oxidase (complex IV, CIV), that cooperate to transfer electrons derived from NADH and succinate to molecular oxygen, creating an electrochemical gradient over the inner membrane that drives transmembrane transport and the ATP synthase. The cytochrome b-c1 complex catalyzes electron transfer from ubiquinol to cytochrome c, linking this redox reaction to translocation of protons across the mitochondrial inner membrane, with protons being carried across the membrane as hydrogens on the quinol. In the process called Q cycle, 2 protons are consumed from the matrix, 4 protons are released into the intermembrane space and 2 electrons are passed to cytochrome c. The Rieske protein is a catalytic core subunit containing a [2Fe-2S] iron-sulfur cluster. It cycles between 2 conformational states during catalysis to transfer electrons from the quinol bound in the Q(0) site in cytochrome b to cytochrome c1. This is Cytochrome b-c1 complex subunit Rieske-1, mitochondrial from Nicotiana tabacum (Common tobacco).